Consider the following 253-residue polypeptide: NAD-dependent protein deacetylase (253 aa).

The Deacetylase sirtuin-type domain occupies Ala-3–Asn-253. NAD(+) contacts are provided by Ala-29, Thr-33, Phe-40, Arg-41, Gln-106, Ile-108, Asp-109, and His-126. Phe-40 contacts nicotinamide. 2 residues coordinate nicotinamide: Ile-108 and Asp-109. His-126 acts as the Proton acceptor in catalysis. Zn(2+) contacts are provided by Cys-134, Cys-137, Cys-159, and Cys-162. Ser-200, Ser-201, Asn-225, Asp-242, and Ile-243 together coordinate NAD(+).

Belongs to the sirtuin family. Class U subfamily. Zn(2+) serves as cofactor.

The protein resides in the cytoplasm. It catalyses the reaction N(6)-acetyl-L-lysyl-[protein] + NAD(+) + H2O = 2''-O-acetyl-ADP-D-ribose + nicotinamide + L-lysyl-[protein]. In terms of biological role, NAD-dependent protein deacetylase which modulates the activities of several enzymes which are inactive in their acetylated form. This Rhodopseudomonas palustris (strain ATCC BAA-98 / CGA009) protein is NAD-dependent protein deacetylase.